Here is an 809-residue protein sequence, read N- to C-terminus: WD repeat protein iqw1 (809 aa).

WD repeat units lie at residues 43–82, 87–128, 141–180, 193–233, and 241–295; these read GHTG…KPRH, GHVQ…EGGM, CALD…VCNQ, PYRI…KSFR, and SPEK…LFHV. Residues 599–644 form a disordered region; that stretch reads SMYTGHSDLNDDDDDYQDEESYSYASDDDDESDEDSDEGPTLLSLR. Residues 608–636 show a composition bias toward acidic residues; it reads NDDDDDYQDEESYSYASDDDDESDEDSDE. WD repeat units follow at residues 668 to 708 and 711 to 750; these read CNVE…ILAI and GDSE…PSGC.

As to quaternary structure, interacts with ddb1.

It localises to the cytoplasm. Its function is as follows. Ligand-dependent coactivator of nuclear receptors that may function as a substrate receptor for CUL4-DDB1 E3 ubiquitin-protein ligase complex. The polypeptide is WD repeat protein iqw1 (iqw1) (Schizosaccharomyces pombe (strain 972 / ATCC 24843) (Fission yeast)).